The primary structure comprises 45 residues: Large ribosomal subunit protein bL34 (45 aa).

Residues 1–45 (MTKRTLGGTVRKQKRTSGFRARMRSHTGQNVIRARRKKGRHRLTV) form a disordered region. Composition is skewed to basic residues over residues 11-25 (RKQK…RMRS) and 33-45 (RARR…RLTV).

The protein belongs to the bacterial ribosomal protein bL34 family.

This is Large ribosomal subunit protein bL34 from Picosynechococcus sp. (strain ATCC 27264 / PCC 7002 / PR-6) (Agmenellum quadruplicatum).